Reading from the N-terminus, the 164-residue chain is 6,7-dimethyl-8-ribityllumazine synthase (164 aa).

5-amino-6-(D-ribitylamino)uracil-binding positions include Y30, 61 to 63 (ALE), and 85 to 87 (CVI). 90-91 (ET) lines the (2S)-2-hydroxy-3-oxobutyl phosphate pocket. H93 serves as the catalytic Proton donor. Residue N118 participates in 5-amino-6-(D-ribitylamino)uracil binding. R132 is a (2S)-2-hydroxy-3-oxobutyl phosphate binding site.

It belongs to the DMRL synthase family.

The enzyme catalyses (2S)-2-hydroxy-3-oxobutyl phosphate + 5-amino-6-(D-ribitylamino)uracil = 6,7-dimethyl-8-(1-D-ribityl)lumazine + phosphate + 2 H2O + H(+). It participates in cofactor biosynthesis; riboflavin biosynthesis; riboflavin from 2-hydroxy-3-oxobutyl phosphate and 5-amino-6-(D-ribitylamino)uracil: step 1/2. Catalyzes the formation of 6,7-dimethyl-8-ribityllumazine by condensation of 5-amino-6-(D-ribitylamino)uracil with 3,4-dihydroxy-2-butanone 4-phosphate. This is the penultimate step in the biosynthesis of riboflavin. This is 6,7-dimethyl-8-ribityllumazine synthase from Methylobacterium radiotolerans (strain ATCC 27329 / DSM 1819 / JCM 2831 / NBRC 15690 / NCIMB 10815 / 0-1).